We begin with the raw amino-acid sequence, 292 residues long: Aquaporin-3 (292 aa).

Over methionine 1–glutamine 24 the chain is Cytoplasmic. Residues alanine 25 to serine 42 form a helical membrane-spanning segment. Residues valine 43–phenylalanine 56 are Extracellular-facing. A helical membrane pass occupies residues leucine 57 to alanine 74. Residues glycine 75–serine 78 are Cytoplasmic-facing. Positions glycine 79–phenylalanine 92 form an intramembrane region, discontinuously helical. An NPA 1 motif is present at residues asparagine 83–alanine 85. The Cytoplasmic segment spans residues leucine 93–lysine 100. Residues leucine 101–glycine 121 traverse the membrane as a helical segment. At leucine 122–asparagine 159 the chain is on the extracellular side. N-linked (GlcNAc...) asparagine glycosylation is present at asparagine 141. A helical membrane pass occupies residues glycine 160–alanine 177. Over isoleucine 178 to glycine 189 the chain is Cytoplasmic. A helical transmembrane segment spans residues leucine 190 to methionine 206. Residues glycine 207–serine 210 lie on the Extracellular side of the membrane. Positions glycine 211–leucine 224 form an intramembrane region, discontinuously helical. The NPA 2 signature appears at asparagine 215–alanine 217. The Extracellular segment spans residues phenylalanine 225–tryptophan 242. A helical transmembrane segment spans residues tryptophan 243–methionine 264. At isoleucine 265–isoleucine 292 the chain is on the cytoplasmic side.

Belongs to the MIP/aquaporin (TC 1.A.8) family. As to quaternary structure, homotetramer; each monomer provides an independent glycerol/water pore. Could also exist in other oligomeric states. Detected in kidney medulla and papilla, in collecting duct cells. Detected in colon.

The protein localises to the cell membrane. It localises to the basolateral cell membrane. The catalysed reaction is glycerol(in) = glycerol(out). It catalyses the reaction H2O(in) = H2O(out). The enzyme catalyses urea(in) = urea(out). It carries out the reaction H2O2(out) = H2O2(in). Channel activity is inhibited by mercury ions. Its function is as follows. Aquaglyceroporins form homotetrameric transmembrane channels, with each monomer independently mediating glycerol and water transport across the plasma membrane along their osmotic gradient. Could also be permeable to urea. Also participates in cell permeability to H2O2 and H2O2-mediated signaling. In skin, transports glycerol to the epidermis and stratum corneum, where it maintains hydration, elasticity, and supports lipid biosynthesis for barrier repair. In kidney, contributes to the reabsorption of water, helping the body maintain proper fluid balance. The sequence is that of Aquaporin-3 from Rattus norvegicus (Rat).